Consider the following 251-residue polypeptide: Flap endonuclease Xni (251 aa).

A Mg(2+)-binding site is contributed by aspartate 104. The 90-residue stretch at 160-249 (VSPGQLADFW…LDGNLQQLRL (90 aa)) folds into the 5'-3' exonuclease domain. The K(+) site is built by leucine 171, alanine 172, proline 180, valine 182, and isoleucine 185. Positions 184–189 (GIGPKS) are interaction with DNA.

This sequence belongs to the Xni family. Requires Mg(2+) as cofactor. K(+) is required as a cofactor.

Its function is as follows. Has flap endonuclease activity. During DNA replication, flap endonucleases cleave the 5'-overhanging flap structure that is generated by displacement synthesis when DNA polymerase encounters the 5'-end of a downstream Okazaki fragment. This Cronobacter sakazakii (strain ATCC BAA-894) (Enterobacter sakazakii) protein is Flap endonuclease Xni.